Reading from the N-terminus, the 282-residue chain is MASFQRKGLQARILSTEEEEKLKRDQALVSAFKQQKLEKEAQKNWDLFYKRNSTNFFKDRHWTTREFEELRSCREYEGQKLTLLEAGCGVGNCLFPLLEEDLNLFAYACDFSPRAVDYVKQHPLYNAERCKVFQCDLTRDDLLDHVPPESVDAVTLIFVLSAVHPEKMRLVLLNVYKVLKPGRSVLFRDYGLNDHAMLRFKAGSKLGENFYVRQDGTRSYFFTDEFLAQLFVDAGYEEVVNEYVFRETVNKKEGLCVPRVFLQSKFRKPPKDPAPTSDSASL.

Trp-45, Tyr-49, Gly-87, Asp-110, Asp-136, Leu-137, and Ile-157 together coordinate S-adenosyl-L-methionine.

This sequence belongs to the methyltransferase superfamily. METL family. In terms of assembly, monomer. Interacts with SARS1/SerRS; interaction is mediated via tRNA(Ser) and is required for N(3)-methylcytidine methylation.

The protein localises to the cytoplasm. It is found in the nucleus. The enzyme catalyses cytidine(32) in tRNA(Ser) + S-adenosyl-L-methionine = N(3)-methylcytidine(32) in tRNA(Ser) + S-adenosyl-L-homocysteine + H(+). Its function is as follows. S-adenosyl-L-methionine-dependent methyltransferase that mediates N(3)-methylcytidine modification of residue 32 of the tRNA anticodon loop of tRNA(Ser), including tRNA(Ser)(UGA) and tRNA(Ser)(GCU). Interaction with SARS1/SerRS is required for N(3)-methylcytidine methylation. This is tRNA N(3)-cytidine methyltransferase METTL6 from Mus musculus (Mouse).